A 185-amino-acid chain; its full sequence is Lipopolysaccharide export system protein LptA (185 aa).

Positions 1–27 are cleaved as a signal peptide; sequence MKFKTNKLSLNLVLASSLLAASIPAFA. Positions 166–185 are disordered; it reads PSQLQDKNNKGQTPAQKKGN.

Belongs to the LptA family. In terms of assembly, component of the lipopolysaccharide transport and assembly complex.

It is found in the periplasm. Involved in the assembly of lipopolysaccharide (LPS). Required for the translocation of LPS from the inner membrane to the outer membrane. May form a bridge between the inner membrane and the outer membrane, via interactions with LptC and LptD, thereby facilitating LPS transfer across the periplasm. The polypeptide is Lipopolysaccharide export system protein LptA (Escherichia coli O157:H7).